The sequence spans 500 residues: L-arabinose isomerase (500 aa).

Residues Glu306, Glu333, His350, and His450 each contribute to the Mn(2+) site.

It belongs to the arabinose isomerase family. In terms of assembly, homohexamer. Requires Mn(2+) as cofactor.

The enzyme catalyses beta-L-arabinopyranose = L-ribulose. Its pathway is carbohydrate degradation; L-arabinose degradation via L-ribulose; D-xylulose 5-phosphate from L-arabinose (bacterial route): step 1/3. Its function is as follows. Catalyzes the conversion of L-arabinose to L-ribulose. In Yersinia pseudotuberculosis serotype I (strain IP32953), this protein is L-arabinose isomerase.